The chain runs to 155 residues: 6,7-dimethyl-8-ribityllumazine synthase (155 aa).

5-amino-6-(D-ribitylamino)uracil-binding positions include F23, 57–59 (AFE), and 81–83 (AVI). Position 86–87 (86–87 (ST)) interacts with (2S)-2-hydroxy-3-oxobutyl phosphate. H89 acts as the Proton donor in catalysis. 5-amino-6-(D-ribitylamino)uracil is bound at residue F114. Position 128 (R128) interacts with (2S)-2-hydroxy-3-oxobutyl phosphate.

It belongs to the DMRL synthase family.

It catalyses the reaction (2S)-2-hydroxy-3-oxobutyl phosphate + 5-amino-6-(D-ribitylamino)uracil = 6,7-dimethyl-8-(1-D-ribityl)lumazine + phosphate + 2 H2O + H(+). The protein operates within cofactor biosynthesis; riboflavin biosynthesis; riboflavin from 2-hydroxy-3-oxobutyl phosphate and 5-amino-6-(D-ribitylamino)uracil: step 1/2. Its function is as follows. Catalyzes the formation of 6,7-dimethyl-8-ribityllumazine by condensation of 5-amino-6-(D-ribitylamino)uracil with 3,4-dihydroxy-2-butanone 4-phosphate. This is the penultimate step in the biosynthesis of riboflavin. This is 6,7-dimethyl-8-ribityllumazine synthase from Dehalococcoides mccartyi (strain ATCC BAA-2100 / JCM 16839 / KCTC 5957 / BAV1).